We begin with the raw amino-acid sequence, 169 residues long: S-ribosylhomocysteine lyase (169 aa).

Fe cation-binding residues include His-54, His-58, and Cys-128.

The protein belongs to the LuxS family. Homodimer. Fe cation is required as a cofactor.

It carries out the reaction S-(5-deoxy-D-ribos-5-yl)-L-homocysteine = (S)-4,5-dihydroxypentane-2,3-dione + L-homocysteine. Its function is as follows. Involved in the synthesis of autoinducer 2 (AI-2) which is secreted by bacteria and is used to communicate both the cell density and the metabolic potential of the environment. The regulation of gene expression in response to changes in cell density is called quorum sensing. Catalyzes the transformation of S-ribosylhomocysteine (RHC) to homocysteine (HC) and 4,5-dihydroxy-2,3-pentadione (DPD). The polypeptide is S-ribosylhomocysteine lyase (Shewanella oneidensis (strain ATCC 700550 / JCM 31522 / CIP 106686 / LMG 19005 / NCIMB 14063 / MR-1)).